The chain runs to 58 residues: U-scoloptoxin(14)-Sa1a (58 aa).

The signal sequence occupies residues 1–18; sequence MNRILGMIFLFCLISCYA.

This sequence belongs to the scoloptoxin-14 family. In terms of processing, contains 4 disulfide bonds. As to expression, expressed by the venom gland.

The protein localises to the secreted. The sequence is that of U-scoloptoxin(14)-Sa1a from Scolopendra alternans (Florida Keys giant centipede).